A 378-amino-acid polypeptide reads, in one-letter code: 3-dehydroquinate synthase (378 aa).

Residues 111–115 (GVIGD), 135–136 (TS), Lys148, and Lys157 contribute to the NAD(+) site. Residues Glu190, His252, and His271 each coordinate Zn(2+).

Belongs to the sugar phosphate cyclases superfamily. Dehydroquinate synthase family. It depends on NAD(+) as a cofactor. The cofactor is Co(2+). Zn(2+) serves as cofactor.

It is found in the cytoplasm. The catalysed reaction is 7-phospho-2-dehydro-3-deoxy-D-arabino-heptonate = 3-dehydroquinate + phosphate. It functions in the pathway metabolic intermediate biosynthesis; chorismate biosynthesis; chorismate from D-erythrose 4-phosphate and phosphoenolpyruvate: step 2/7. Its function is as follows. Catalyzes the conversion of 3-deoxy-D-arabino-heptulosonate 7-phosphate (DAHP) to dehydroquinate (DHQ). The protein is 3-dehydroquinate synthase of Mesorhizobium japonicum (strain LMG 29417 / CECT 9101 / MAFF 303099) (Mesorhizobium loti (strain MAFF 303099)).